Consider the following 402-residue polypeptide: ORC1-type DNA replication protein 17 (402 aa).

Residues tyrosine 223 and arginine 235 each coordinate ATP.

Belongs to the CDC6/cdc18 family.

Functionally, involved in regulation of DNA replication. The polypeptide is ORC1-type DNA replication protein 17 (cdc6q) (Haloarcula marismortui (strain ATCC 43049 / DSM 3752 / JCM 8966 / VKM B-1809) (Halobacterium marismortui)).